Consider the following 434-residue polypeptide: Enolase (434 aa).

(2R)-2-phosphoglycerate is bound at residue Gln163. Glu205 (proton donor) is an active-site residue. Residues Asp242, Glu289, and Asp316 each contribute to the Mg(2+) site. 4 residues coordinate (2R)-2-phosphoglycerate: Lys341, Arg370, Ser371, and Lys392. The active-site Proton acceptor is Lys341.

It belongs to the enolase family. It depends on Mg(2+) as a cofactor.

It localises to the cytoplasm. Its subcellular location is the secreted. It is found in the cell surface. The enzyme catalyses (2R)-2-phosphoglycerate = phosphoenolpyruvate + H2O. The protein operates within carbohydrate degradation; glycolysis; pyruvate from D-glyceraldehyde 3-phosphate: step 4/5. Its function is as follows. Catalyzes the reversible conversion of 2-phosphoglycerate (2-PG) into phosphoenolpyruvate (PEP). It is essential for the degradation of carbohydrates via glycolysis. This chain is Enolase, found in Lacticaseibacillus casei (strain BL23) (Lactobacillus casei).